The primary structure comprises 410 residues: Acetate kinase (410 aa).

Residue asparagine 7 coordinates Mg(2+). Lysine 14 provides a ligand contact to ATP. Arginine 98 provides a ligand contact to substrate. Residue aspartate 155 is the Proton donor/acceptor of the active site. Residues 215-219 (HLGNG), 290-292 (DMR), and 338-342 (GIGEN) each bind ATP. Residue glutamate 392 coordinates Mg(2+).

The protein belongs to the acetokinase family. In terms of assembly, homodimer. The cofactor is Mg(2+). It depends on Mn(2+) as a cofactor.

Its subcellular location is the cytoplasm. The catalysed reaction is acetate + ATP = acetyl phosphate + ADP. The protein operates within metabolic intermediate biosynthesis; acetyl-CoA biosynthesis; acetyl-CoA from acetate: step 1/2. Catalyzes the formation of acetyl phosphate from acetate and ATP. Can also catalyze the reverse reaction. The polypeptide is Acetate kinase (Kocuria rhizophila (strain ATCC 9341 / DSM 348 / NBRC 103217 / DC2201)).